Here is a 252-residue protein sequence, read N- to C-terminus: MFLIMLKGHILMDAPTPWGIFFQDSASPQMEGIMELHNNIMFYLAIILFTVTWMMITIIRNFVAKKSPIAHKYMNHGTLIELIWTITPAFILILIAFPSFKLLYLMDEVMDPSLVVYAEGHQWYWSYQYPDFTNEDNEFIEFDSYIVPESDLEEGQFRMLEVDNRVIIPELTHTAFVISADVIHSYACPSLGIKADAYPGRLNQASVYINGPGTFFGQCSEICGILHSSMNIAIQSVSIKDFLLWLRDQMEG.

The Mitochondrial intermembrane segment spans residues 1 to 39; the sequence is MFLIMLKGHILMDAPTPWGIFFQDSASPQMEGIMELHNN. Residues 40–59 traverse the membrane as a helical segment; the sequence is IMFYLAIILFTVTWMMITII. Residues 60–81 are Mitochondrial matrix-facing; the sequence is RNFVAKKSPIAHKYMNHGTLIE. A helical membrane pass occupies residues 82 to 105; it reads LIWTITPAFILILIAFPSFKLLYL. The Mitochondrial intermembrane portion of the chain corresponds to 106–252; sequence MDEVMDPSLV…LLWLRDQMEG (147 aa). Cu cation contacts are provided by H184, C219, E221, C223, H227, and M230. E221 provides a ligand contact to Mg(2+).

This sequence belongs to the cytochrome c oxidase subunit 2 family. In terms of assembly, component of the cytochrome c oxidase (complex IV, CIV), a multisubunit enzyme composed of a catalytic core of 3 subunits and several supernumerary subunits. The complex exists as a monomer or a dimer and forms supercomplexes (SCs) in the inner mitochondrial membrane with ubiquinol-cytochrome c oxidoreductase (cytochrome b-c1 complex, complex III, CIII). Cu cation serves as cofactor.

The protein localises to the mitochondrion inner membrane. The catalysed reaction is 4 Fe(II)-[cytochrome c] + O2 + 8 H(+)(in) = 4 Fe(III)-[cytochrome c] + 2 H2O + 4 H(+)(out). In terms of biological role, component of the cytochrome c oxidase, the last enzyme in the mitochondrial electron transport chain which drives oxidative phosphorylation. The respiratory chain contains 3 multisubunit complexes succinate dehydrogenase (complex II, CII), ubiquinol-cytochrome c oxidoreductase (cytochrome b-c1 complex, complex III, CIII) and cytochrome c oxidase (complex IV, CIV), that cooperate to transfer electrons derived from NADH and succinate to molecular oxygen, creating an electrochemical gradient over the inner membrane that drives transmembrane transport and the ATP synthase. Cytochrome c oxidase is the component of the respiratory chain that catalyzes the reduction of oxygen to water. Electrons originating from reduced cytochrome c in the intermembrane space (IMS) are transferred via the dinuclear copper A center (CU(A)) of subunit 2 and heme A of subunit 1 to the active site in subunit 1, a binuclear center (BNC) formed by heme A3 and copper B (CU(B)). The BNC reduces molecular oxygen to 2 water molecules using 4 electrons from cytochrome c in the IMS and 4 protons from the mitochondrial matrix. The chain is Cytochrome c oxidase subunit 2 (cox2) from Emericella nidulans (Aspergillus nidulans).